Consider the following 312-residue polypeptide: Small ribosomal subunit protein RACK1 (312 aa).

7 WD repeats span residues 9-42 (GHRG…ISWK), 63-93 (GHTG…RMWD), 105-135 (KHTK…RVWN), 148-180 (GHED…KVWN), 192-222 (GHSN…LLWD), 233-262 (NVES…SVYD), and 279-307 (PSEC…RVWS).

Belongs to the WD repeat G protein beta family. Ribosomal protein RACK1 subfamily.

This Leishmania chagasi protein is Small ribosomal subunit protein RACK1.